The chain runs to 203 residues: Urease accessory protein UreG (203 aa).

Glycine 14–threonine 21 is a binding site for GTP.

The protein belongs to the SIMIBI class G3E GTPase family. UreG subfamily. In terms of assembly, homodimer. UreD, UreF and UreG form a complex that acts as a GTP-hydrolysis-dependent molecular chaperone, activating the urease apoprotein by helping to assemble the nickel containing metallocenter of UreC. The UreE protein probably delivers the nickel.

It is found in the cytoplasm. Functionally, facilitates the functional incorporation of the urease nickel metallocenter. This process requires GTP hydrolysis, probably effectuated by UreG. The chain is Urease accessory protein UreG from Rhizobium johnstonii (strain DSM 114642 / LMG 32736 / 3841) (Rhizobium leguminosarum bv. viciae).